Consider the following 348-residue polypeptide: Methylthioribose-1-phosphate isomerase (348 aa).

Substrate contacts are provided by residues 47 to 49 (RGA), Arg90, and Gln196. Asp237 serves as the catalytic Proton donor. A substrate-binding site is contributed by 247–248 (NK).

The protein belongs to the eIF-2B alpha/beta/delta subunits family. MtnA subfamily.

The enzyme catalyses 5-(methylsulfanyl)-alpha-D-ribose 1-phosphate = 5-(methylsulfanyl)-D-ribulose 1-phosphate. The protein operates within amino-acid biosynthesis; L-methionine biosynthesis via salvage pathway; L-methionine from S-methyl-5-thio-alpha-D-ribose 1-phosphate: step 1/6. Its function is as follows. Catalyzes the interconversion of methylthioribose-1-phosphate (MTR-1-P) into methylthioribulose-1-phosphate (MTRu-1-P). In Synechococcus sp. (strain ATCC 27144 / PCC 6301 / SAUG 1402/1) (Anacystis nidulans), this protein is Methylthioribose-1-phosphate isomerase.